Reading from the N-terminus, the 348-residue chain is Chaperone protein DnaJ (348 aa).

The 63-residue stretch at 3 to 65 (DLYGILGVDH…EQRQRYDRHV (63 aa)) folds into the J domain. The CR-type zinc finger occupies 109-191 (GGSQVVKIDS…CYGNGSRSAP (83 aa)). Cysteine 122, cysteine 125, cysteine 139, cysteine 142, cysteine 165, cysteine 168, cysteine 179, and cysteine 182 together coordinate Zn(2+). CXXCXGXG motif repeat units lie at residues 122–129 (CDVCNGTR), 139–146 (CFDCNGSG), 165–172 (CSKCRGNG), and 179–186 (CRRCYGNG).

Belongs to the DnaJ family. In terms of assembly, homodimer. Requires Zn(2+) as cofactor.

It localises to the cytoplasm. Functionally, participates actively in the response to hyperosmotic and heat shock by preventing the aggregation of stress-denatured proteins and by disaggregating proteins, also in an autonomous, DnaK-independent fashion. Unfolded proteins bind initially to DnaJ; upon interaction with the DnaJ-bound protein, DnaK hydrolyzes its bound ATP, resulting in the formation of a stable complex. GrpE releases ADP from DnaK; ATP binding to DnaK triggers the release of the substrate protein, thus completing the reaction cycle. Several rounds of ATP-dependent interactions between DnaJ, DnaK and GrpE are required for fully efficient folding. Also involved, together with DnaK and GrpE, in the DNA replication of plasmids through activation of initiation proteins. The protein is Chaperone protein DnaJ of Tropheryma whipplei (strain TW08/27) (Whipple's bacillus).